The primary structure comprises 166 residues: UPF0178 protein BPUM_2255 (166 aa).

Belongs to the UPF0178 family.

The polypeptide is UPF0178 protein BPUM_2255 (Bacillus pumilus (strain SAFR-032)).